The primary structure comprises 84 residues: Small ribosomal subunit protein uS17 (84 aa).

Belongs to the universal ribosomal protein uS17 family. Part of the 30S ribosomal subunit.

One of the primary rRNA binding proteins, it binds specifically to the 5'-end of 16S ribosomal RNA. The chain is Small ribosomal subunit protein uS17 from Clostridium beijerinckii (strain ATCC 51743 / NCIMB 8052) (Clostridium acetobutylicum).